Here is an 888-residue protein sequence, read N- to C-terminus: Serine/threonine-protein phosphatase 1 regulatory subunit 10 (888 aa).

The tract at residues 1–348 is interaction with TOX4; the sequence is MGSGPIDPKE…EPAPPAEPMD (348 aa). The TFIIS N-terminal domain maps to 73–147; it reads KLLNNWLTYS…SDWMAVIRSQ (75 aa). Disordered regions lie at residues 147 to 213, 247 to 270, 306 to 400, and 534 to 853; these read QSST…STGL, SATA…NTAP, KKKK…KTVT, and VETL…HGGD. Basic and acidic residues-rich tracts occupy residues 153–166 and 174–196; these read AEKD…EGKS and PLTE…EKPK. A Glycyl lysine isopeptide (Lys-Gly) (interchain with G-Cter in SUMO2) cross-link involves residue lysine 179. A compositionally biased stretch (low complexity) spans 248-258; it reads ATAAPGDAAPP. Lysine 262 is covalently cross-linked (Glycyl lysine isopeptide (Lys-Gly) (interchain with G-Cter in SUMO2)). Serine 313 carries the post-translational modification Phosphoserine. A compositionally biased stretch (polar residues) spans 325–334; the sequence is KTSTEQSTAK. A Phosphoserine modification is found at serine 382. Positions 388-417 are necessary for interaction with PPP1CA; it reads QLTRKGRKRKTVTWPEEGKLREYFYFELDE. The interval 393 to 408 is necessary for interaction with PPP1CC; sequence GRKRKTVTWPEEGKLR. A PP1-binding motif motif is present at residues 394-423; sequence RKRKTVTWPEEGKLREYFYFELDETERVNV. Residue threonine 398 is modified to Phosphothreonine. Residues 418–619 form an interaction with WDR82 region; the sequence is TERVNVNKIK…LKQMLVPHGL (202 aa). Residues 540–551 are compositionally biased toward gly residues; the sequence is GGSGGSPDGAGG. A phosphoserine mark is found at serine 545 and serine 591. The segment covering 583–595 has biased composition (polar residues); that stretch reads EILTSIMGSPNSH. A compositionally biased stretch (basic and acidic residues) spans 596–611; it reads PSEELLKQPDYSDKLK. Positions 644-655 are enriched in pro residues; it reads PPGPGGPMPGPH. Omega-N-methylarginine is present on arginine 665. The span at 674–690 shows a compositional bias: low complexity; the sequence is RGGDPFWDGPGDPMRGG. Residues arginine 693 and arginine 737 each carry the omega-N-methylarginine modification. Gly residues-rich tracts occupy residues 724–762 and 784–794; these read ARGG…GSMG and GPGGNMGGSGG. Positions 811–851 are enriched in basic and acidic residues; that stretch reads PHDVPSHRGHDHRGPPPHEHRGHDGHGGGGHRGHDGGHSHG. Residues 854 to 882 form a C3H1-type zinc finger; sequence MSNRPVCRHFMMKGNCRYENNCAFYHPGV.

In terms of assembly, component of the PNUTS-PP1 complex (also named PTW/PP1 complex), composed of PPP1R10/PNUTS, TOX4, WDR82, and PPP1CA (or PPP1CB or PPP1CC). In terms of processing, phosphorylated on Ser-398 by PKA within the region necessary for interaction with PPP1CA.

It localises to the nucleus. It is found in the chromosome. In terms of biological role, substrate-recognition component of the PNUTS-PP1 protein phosphatase complex, a protein phosphatase 1 (PP1) complex that promotes RNA polymerase II transcription pause-release, allowing transcription elongation. Promoter-proximal pausing by RNA polymerase II is a transcription halt following transcription initiation but prior to elongation, which acts as a checkpoint to control that transcripts are favorably configured for transcriptional elongation. The PNUTS-PP1 complex mediates the release of RNA polymerase II from promoter-proximal region of genes by catalyzing dephosphorylation of proteins involved in transcription, such as AFF4, CDK9, MEPCE, INTS12, NCBP1, POLR2M/GDOWN1 and SUPT6H. The PNUTS-PP1 complex also regulates RNA polymerase II transcription termination by mediating dephosphorylation of SUPT5H in termination zones downstream of poly(A) sites, thereby promoting deceleration of RNA polymerase II transcription. PNUTS-PP1 complex is also involved in the response to replication stress by mediating dephosphorylation of POLR2A at 'Ser-5' of the CTD, promoting RNA polymerase II degradation. The PNUTS-PP1 complex also plays a role in the control of chromatin structure and cell cycle progression during the transition from mitosis into interphase. PNUTS-PP1 complex mediates dephosphorylation of MYC, promoting MYC stability by preventing MYC ubiquitination by the SCF(FBXW7) complex. In addition to acts as a substrate-recognition component, PPP1R10/PNUTS also acts as a nuclear targeting subunit for the PNUTS-PP1 complex. In some context, PPP1R10/PNUTS also acts as an inhibitor of protein phosphatase 1 (PP1) activity by preventing access to substrates, such as RB. In Mus musculus (Mouse), this protein is Serine/threonine-protein phosphatase 1 regulatory subunit 10.